The sequence spans 155 residues: Protein SprT-like (155 aa).

The 143-residue stretch at 6–148 folds into the SprT-like domain; sequence LQRLVERVSL…VCGQCGGKLM (143 aa). His67 contributes to the Zn(2+) binding site. Residue Glu68 is part of the active site. Position 71 (His71) interacts with Zn(2+).

Belongs to the SprT family. The cofactor is Zn(2+).

It localises to the cytoplasm. The sequence is that of Protein SprT-like from Geobacillus sp. (strain WCH70).